A 126-amino-acid chain; its full sequence is Ribosome-binding factor A (126 aa).

It belongs to the RbfA family. As to quaternary structure, monomer. Binds 30S ribosomal subunits, but not 50S ribosomal subunits or 70S ribosomes.

It is found in the cytoplasm. Its function is as follows. One of several proteins that assist in the late maturation steps of the functional core of the 30S ribosomal subunit. Associates with free 30S ribosomal subunits (but not with 30S subunits that are part of 70S ribosomes or polysomes). Required for efficient processing of 16S rRNA. May interact with the 5'-terminal helix region of 16S rRNA. In Clostridioides difficile (strain 630) (Peptoclostridium difficile), this protein is Ribosome-binding factor A.